The chain runs to 355 residues: Probable dual-specificity RNA methyltransferase RlmN (355 aa).

Glutamate 89 (proton acceptor) is an active-site residue. A Radical SAM core domain is found at 95 to 322; the sequence is YENRKTVCLS…KRLGVPTSIR (228 aa). Cysteine 102 and cysteine 333 are joined by a disulfide. Residues cysteine 109, cysteine 113, and cysteine 116 each coordinate [4Fe-4S] cluster. Residues 159 to 160, serine 191, 214 to 216, and asparagine 290 contribute to the S-adenosyl-L-methionine site; these read GE and SLH. Residue cysteine 333 is the S-methylcysteine intermediate of the active site.

Belongs to the radical SAM superfamily. RlmN family. [4Fe-4S] cluster is required as a cofactor.

The protein localises to the cytoplasm. It catalyses the reaction adenosine(2503) in 23S rRNA + 2 reduced [2Fe-2S]-[ferredoxin] + 2 S-adenosyl-L-methionine = 2-methyladenosine(2503) in 23S rRNA + 5'-deoxyadenosine + L-methionine + 2 oxidized [2Fe-2S]-[ferredoxin] + S-adenosyl-L-homocysteine. The enzyme catalyses adenosine(37) in tRNA + 2 reduced [2Fe-2S]-[ferredoxin] + 2 S-adenosyl-L-methionine = 2-methyladenosine(37) in tRNA + 5'-deoxyadenosine + L-methionine + 2 oxidized [2Fe-2S]-[ferredoxin] + S-adenosyl-L-homocysteine. In terms of biological role, specifically methylates position 2 of adenine 2503 in 23S rRNA and position 2 of adenine 37 in tRNAs. The polypeptide is Probable dual-specificity RNA methyltransferase RlmN (Thermus thermophilus (strain ATCC 27634 / DSM 579 / HB8)).